The chain runs to 238 residues: Partner of Y14 and mago (238 aa).

Residues 1 to 183 (MTTYATDSQG…GADGHSDLSK (183 aa)) form a disordered region. Basic and acidic residues-rich tracts occupy residues 65–77 (QKAR…EQRK) and 123–133 (LEQKQKEEQKA). Positions 136 to 155 (RQQAQDQRNSKQQQSQNQSK) are enriched in low complexity. Residues 176 to 233 (DGHSDLSKKLRKLRKKIREIEVIEERLRASDGPRPDKDQIEKAKRKAEILKEIEELER) are a coiled coil.

It belongs to the pym family. In terms of assembly, interacts (via N-terminus) with mago and tsu/Y14; the interaction is direct.

The protein resides in the cytoplasm. It is found in the nucleus. In terms of biological role, regulator of the exon junction complex (EJC), a multiprotein complex that associates immediately upstream of the exon-exon junction on mRNAs and serves as a positional landmarks for the intron exon structure of genes and directs post-transcriptional processes in the cytoplasm such as mRNA export, nonsense-mediated mRNA decay (NMD) or translation. This is Partner of Y14 and mago from Culex quinquefasciatus (Southern house mosquito).